The sequence spans 742 residues: Synaptic vesicle glycoprotein 2A (742 aa).

The segment at 1-57 (MEEGFRDRAAFIRGAKDIAKEVKKHAAKKVVKGLDRVQDEYSRRSYSRFEEEDDDDD) is interaction with SYT1. The Cytoplasmic segment spans residues 1–169 (MEEGFRDRAA…GHGRFQWTLY (169 aa)). The span at 33–49 (GLDRVQDEYSRRSYSRF) shows a compositional bias: basic and acidic residues. The tract at residues 33 to 144 (GLDRVQDEYS…GRGEAQRRKE (112 aa)) is disordered. Serine 80 and serine 81 each carry phosphoserine. Threonine 84 carries the post-translational modification Phosphothreonine. Residues 122 to 137 (VRGGLSDGEGPPGGRG) show a composition bias toward gly residues. The residue at position 127 (serine 127) is a Phosphoserine. The chain crosses the membrane as a helical span at residues 170-190 (FVLGLALMADGVEVFVVGFVL). Over 191 to 205 (PSAEKDMCLSDSNKG) the chain is Extracellular. A helical membrane pass occupies residues 206–226 (MLGLIVYLGMMVGAFLWGGLA). Over 227 to 233 (DRLGRRQ) the chain is Cytoplasmic. The chain crosses the membrane as a helical span at residues 234–254 (CLLISLSVNSVFAFFSSFVQG). At 255–262 (YGTFLFCR) the chain is on the extracellular side. The helical transmembrane segment at 263–283 (LLSGVGIGGSIPIVFSYFSEF) threads the bilayer. Topologically, residues 284-294 (LAQEKRGEHLS) are cytoplasmic. The helical transmembrane segment at 295 to 315 (WLCMFWMIGGVYAAAMAWAII) threads the bilayer. Topologically, residues 316-334 (PHYGWSFQMGSAYQFHSWR) are extracellular. A helical membrane pass occupies residues 335-355 (VFVLVCAFPSVFAIGALTTQP). Residues 356-447 (ESPRFFLENG…CFGPEYRRIT (92 aa)) are Cytoplasmic-facing. Serine 393 carries the phosphoserine modification. The chain crosses the membrane as a helical span at residues 448–468 (LMMMGVWFTMSFSYYGLTVWF). Topologically, residues 469–598 (PDMIRHLQAV…GTGEGAYMVY (130 aa)) are extracellular. Tyrosine 480 carries the post-translational modification Phosphotyrosine. Asparagine 498, asparagine 548, and asparagine 573 each carry an N-linked (GlcNAc...) asparagine glycan. Residues 599 to 619 (FVSFLGTLAVLPGNIVSALLM) traverse the membrane as a helical segment. Over 620–626 (DKIGRLR) the chain is Cytoplasmic. A helical transmembrane segment spans residues 627 to 647 (MLAGSSVMSCVSCFFLSFGNS). Residues 648-651 (ESAM) are Extracellular-facing. A helical membrane pass occupies residues 652–672 (IALLCLFGGVSIASWNALDVL). The Cytoplasmic segment spans residues 673–690 (TVGLYPSDKRTTAFGFLN). Residues 691–711 (ALCKLAAVLGISIFTSFVGIT) form a helical membrane-spanning segment. A topological domain (extracellular) is located at residue lysine 712. A helical membrane pass occupies residues 713–733 (AAPIPFASAALALGSSLALKL). At 734-742 (PETRGQVLQ) the chain is on the cytoplasmic side.

The protein belongs to the major facilitator superfamily. As to quaternary structure, interacts with SYT1/synaptotagmin-1 in a calcium-dependent manner. Binds the adapter protein complex AP-2. In terms of processing, phosphorylation by CK1 of the N-terminal cytoplasmic domain regulates interaction with SYT1. Post-translationally, N-glycosylated.

It localises to the presynapse. The protein resides in the cytoplasmic vesicle. Its subcellular location is the secretory vesicle. It is found in the synaptic vesicle membrane. In terms of biological role, plays a role in the control of regulated secretion in neural and endocrine cells, enhancing selectively low-frequency neurotransmission. Positively regulates vesicle fusion by maintaining the readily releasable pool of secretory vesicles. This Macaca fascicularis (Crab-eating macaque) protein is Synaptic vesicle glycoprotein 2A (SV2A).